Consider the following 206-residue polypeptide: Small ribosomal subunit protein uS4 (206 aa).

Residues 96-156 (SRLDNVVYRM…EKSKKQVRIA (61 aa)) enclose the S4 RNA-binding domain.

Belongs to the universal ribosomal protein uS4 family. As to quaternary structure, part of the 30S ribosomal subunit. Contacts protein S5. The interaction surface between S4 and S5 is involved in control of translational fidelity.

Functionally, one of the primary rRNA binding proteins, it binds directly to 16S rRNA where it nucleates assembly of the body of the 30S subunit. With S5 and S12 plays an important role in translational accuracy. This chain is Small ribosomal subunit protein uS4, found in Laribacter hongkongensis (strain HLHK9).